Reading from the N-terminus, the 372-residue chain is General transcription factor IIH subunit 3 (372 aa).

The segment at 40 to 78 is disordered; the sequence is ISGMNDDNDSSSRYNGSTTIGNNNNNNNNNNSNNNNNVN. Over residues 50–60 the composition is skewed to polar residues; that stretch reads SSRYNGSTTIG. Positions 61-78 are enriched in low complexity; the sequence is NNNNNNNNNNSNNNNNVN. A C4-type zinc finger spans residues 323–340; that stretch reads CSVCLSIFCGHSSSCSTC.

This sequence belongs to the TFB4 family. As to quaternary structure, component of the 7-subunit TFIIH core complex composed of XPB/repB, XPD/repD, gtf2h1, gtf2h2, gtf2h3, gtf2h4 and gtf2h5, which is active in NER. The core complex associates with the 3-subunit CDK-activating kinase (CAK) module composed of cycH/cyclin H, cdk7 and mnat1 to form the 10-subunit holoenzyme (holo-TFIIH) active in transcription.

The protein resides in the nucleus. Its function is as follows. Component of the general transcription and DNA repair factor IIH (TFIIH) core complex, which is involved in general and transcription-coupled nucleotide excision repair (NER) of damaged DNA and, when complexed to CAK, in RNA transcription by RNA polymerase II. In NER, TFIIH acts by opening DNA around the lesion to allow the excision of the damaged oligonucleotide and its replacement by a new DNA fragment. In transcription, TFIIH has an essential role in transcription initiation. When the pre-initiation complex (PIC) has been established, TFIIH is required for promoter opening and promoter escape. Phosphorylation of the C-terminal tail (CTD) of the largest subunit of RNA polymerase II by the kinase module CAK controls the initiation of transcription. This chain is General transcription factor IIH subunit 3 (gtf2h3), found in Dictyostelium discoideum (Social amoeba).